Reading from the N-terminus, the 207-residue chain is NADH-quinone oxidoreductase subunit C (207 aa).

This sequence belongs to the complex I 30 kDa subunit family. NDH-1 is composed of 14 different subunits. Subunits NuoB, C, D, E, F, and G constitute the peripheral sector of the complex.

It localises to the cell inner membrane. It carries out the reaction a quinone + NADH + 5 H(+)(in) = a quinol + NAD(+) + 4 H(+)(out). NDH-1 shuttles electrons from NADH, via FMN and iron-sulfur (Fe-S) centers, to quinones in the respiratory chain. The immediate electron acceptor for the enzyme in this species is believed to be ubiquinone. Couples the redox reaction to proton translocation (for every two electrons transferred, four hydrogen ions are translocated across the cytoplasmic membrane), and thus conserves the redox energy in a proton gradient. The protein is NADH-quinone oxidoreductase subunit C of Bordetella pertussis (strain Tohama I / ATCC BAA-589 / NCTC 13251).